A 515-amino-acid polypeptide reads, in one-letter code: Maturase K (515 aa).

It belongs to the intron maturase 2 family. MatK subfamily.

The protein resides in the plastid. It is found in the chloroplast. Functionally, usually encoded in the trnK tRNA gene intron. Probably assists in splicing its own and other chloroplast group II introns. The chain is Maturase K from Pinus yunnanensis (Yunnan pine).